Reading from the N-terminus, the 234-residue chain is Probable transcriptional regulatory protein PFL_3960 (234 aa).

Belongs to the TACO1 family.

It localises to the cytoplasm. The chain is Probable transcriptional regulatory protein PFL_3960 from Pseudomonas fluorescens (strain ATCC BAA-477 / NRRL B-23932 / Pf-5).